The chain runs to 172 residues: Adenine phosphoribosyltransferase (172 aa).

This sequence belongs to the purine/pyrimidine phosphoribosyltransferase family. As to quaternary structure, homodimer.

Its subcellular location is the cytoplasm. The catalysed reaction is AMP + diphosphate = 5-phospho-alpha-D-ribose 1-diphosphate + adenine. It participates in purine metabolism; AMP biosynthesis via salvage pathway; AMP from adenine: step 1/1. Its function is as follows. Catalyzes a salvage reaction resulting in the formation of AMP, that is energically less costly than de novo synthesis. This is Adenine phosphoribosyltransferase from Pelobacter propionicus (strain DSM 2379 / NBRC 103807 / OttBd1).